The sequence spans 128 residues: Large ribosomal subunit protein bL12 (128 aa).

Belongs to the bacterial ribosomal protein bL12 family. As to quaternary structure, homodimer. Part of the ribosomal stalk of the 50S ribosomal subunit. Forms a multimeric L10(L12)X complex, where L10 forms an elongated spine to which 2 to 4 L12 dimers bind in a sequential fashion. Binds GTP-bound translation factors.

Its function is as follows. Forms part of the ribosomal stalk which helps the ribosome interact with GTP-bound translation factors. Is thus essential for accurate translation. This chain is Large ribosomal subunit protein bL12, found in Kineococcus radiotolerans (strain ATCC BAA-149 / DSM 14245 / SRS30216).